The sequence spans 339 residues: D-erythrose-4-phosphate dehydrogenase (339 aa).

11 to 12 contacts NAD(+); that stretch reads RI. Substrate-binding positions include 158–160, R204, 217–218, and R240; these read SCT and TK. C159 (nucleophile) is an active-site residue. N322 serves as a coordination point for NAD(+).

This sequence belongs to the glyceraldehyde-3-phosphate dehydrogenase family. Epd subfamily. In terms of assembly, homotetramer.

The protein resides in the cytoplasm. The catalysed reaction is D-erythrose 4-phosphate + NAD(+) + H2O = 4-phospho-D-erythronate + NADH + 2 H(+). It functions in the pathway cofactor biosynthesis; pyridoxine 5'-phosphate biosynthesis; pyridoxine 5'-phosphate from D-erythrose 4-phosphate: step 1/5. In terms of biological role, catalyzes the NAD-dependent conversion of D-erythrose 4-phosphate to 4-phosphoerythronate. The protein is D-erythrose-4-phosphate dehydrogenase of Aliivibrio fischeri (strain ATCC 700601 / ES114) (Vibrio fischeri).